The primary structure comprises 134 residues: Small ribosomal subunit protein uS8c (134 aa).

The protein belongs to the universal ribosomal protein uS8 family. As to quaternary structure, part of the 30S ribosomal subunit.

Its subcellular location is the plastid. The protein resides in the chloroplast. Its function is as follows. One of the primary rRNA binding proteins, it binds directly to 16S rRNA central domain where it helps coordinate assembly of the platform of the 30S subunit. This is Small ribosomal subunit protein uS8c (rps8) from Coffea arabica (Arabian coffee).